The sequence spans 393 residues: 1-deoxy-D-xylulose 5-phosphate reductoisomerase (393 aa).

Residues Thr-10, Gly-11, Ser-12, Ile-13, Arg-37, Gln-38, and Asn-124 each contribute to the NADPH site. Lys-125 provides a ligand contact to 1-deoxy-D-xylulose 5-phosphate. Position 126 (Glu-126) interacts with NADPH. Residue Asp-150 coordinates Mn(2+). Positions 151, 152, 179, and 202 each coordinate 1-deoxy-D-xylulose 5-phosphate. A Mn(2+)-binding site is contributed by Glu-152. Gly-208 is a binding site for NADPH. Positions 215, 220, 221, and 224 each coordinate 1-deoxy-D-xylulose 5-phosphate. Mn(2+) is bound at residue Glu-224.

It belongs to the DXR family. Mg(2+) is required as a cofactor. It depends on Mn(2+) as a cofactor.

The enzyme catalyses 2-C-methyl-D-erythritol 4-phosphate + NADP(+) = 1-deoxy-D-xylulose 5-phosphate + NADPH + H(+). Its pathway is isoprenoid biosynthesis; isopentenyl diphosphate biosynthesis via DXP pathway; isopentenyl diphosphate from 1-deoxy-D-xylulose 5-phosphate: step 1/6. Catalyzes the NADPH-dependent rearrangement and reduction of 1-deoxy-D-xylulose-5-phosphate (DXP) to 2-C-methyl-D-erythritol 4-phosphate (MEP). This Cupriavidus taiwanensis (strain DSM 17343 / BCRC 17206 / CCUG 44338 / CIP 107171 / LMG 19424 / R1) (Ralstonia taiwanensis (strain LMG 19424)) protein is 1-deoxy-D-xylulose 5-phosphate reductoisomerase.